The chain runs to 327 residues: Secondary metabolism regulator LAE1 (327 aa).

Belongs to the methyltransferase superfamily. LaeA methyltransferase family.

It localises to the nucleus. It catalyses the reaction L-methionyl-[protein] + S-adenosyl-L-methionine = S-methyl-L-methionyl-[protein] + S-adenosyl-L-homocysteine. In terms of biological role, secondary metabolism regulator that controls the expression of the tenuazonic acid biosynthesis cluster. Methyltransferase that performs automethylation. No other methyl-accepting substrate has been identified yet. The polypeptide is Secondary metabolism regulator LAE1 (Pyricularia oryzae (strain 70-15 / ATCC MYA-4617 / FGSC 8958) (Rice blast fungus)).